A 182-amino-acid chain; its full sequence is MLISHSDLNQQLKSAGIGFNATELHGFLSGLLCGGLKDQSWLPLLYQFSNDNHAYPTGLVQPVTELYEQISQTLSDVEGFTFELGLTEDENVFTQADSLSDWANQFLLGIGLAQPELAKEKGEIGEAVDDLQDICQLGYDEDDNEEELAEALEEIIEYVRTIAMLFYSHFNEGEIESKPVLH.

This sequence belongs to the UPF0149 family.

This chain is UPF0149 protein HI_0817, found in Haemophilus influenzae (strain ATCC 51907 / DSM 11121 / KW20 / Rd).